Here is a 120-residue protein sequence, read N- to C-terminus: MGGNVLPIHYDPKTVKQLTKEITVASCIGAAQGALFSIASALLLRRFSSVYRNVRTQVRVFYHCSWISMGAVFRADKQLLKFQTNYYREEQKRREKIMDEAAERGLFLEDESLNSSRSTT.

The chain crosses the membrane as a helical span at residues 22–44; sequence ITVASCIGAAQGALFSIASALLL. Asn-114 is a glycosylation site (N-linked (GlcNAc...) asparagine).

Its subcellular location is the membrane. This is an uncharacterized protein from Saccharomyces cerevisiae (strain ATCC 204508 / S288c) (Baker's yeast).